A 640-amino-acid chain; its full sequence is ATP-dependent rRNA helicase spb4 (640 aa).

Residues Trp14–Ala42 carry the Q motif motif. Residues Ile45–Val249 enclose the Helicase ATP-binding domain. Ala58–Thr65 is a binding site for ATP. A DEAD box motif is present at residues Asp197–Asp200. A Helicase C-terminal domain is found at Ala283–Ala437. Residues Ala521–Asp629 are a coiled coil. 2 disordered regions span residues Arg531–Lys593 and Arg607–Asp640. Basic and acidic residues predominate over residues Lys577–Lys593. Residues Gly630–Asp640 are compositionally biased toward acidic residues.

This sequence belongs to the DEAD box helicase family. DDX55/SPB4 subfamily. Component of pre-60S ribosomal complexes.

It is found in the nucleus. Its subcellular location is the nucleolus. The catalysed reaction is ATP + H2O = ADP + phosphate + H(+). Its function is as follows. ATP-binding RNA helicase involved in the biogenesis of 60S ribosomal subunits. Binds 90S pre-ribosomal particles and dissociates from pre-60S ribosomal particles after processing of 27SB pre-rRNA. Required for the normal formation of 18S rRNA through the processing of pre-rRNAs at sites A0, A1 and A2, and the normal formation of 25S and 5.8S rRNAs through the processing of pre-rRNAs at sites C1 and C2. In Aspergillus fumigatus (strain ATCC MYA-4609 / CBS 101355 / FGSC A1100 / Af293) (Neosartorya fumigata), this protein is ATP-dependent rRNA helicase spb4.